The chain runs to 686 residues: Epsin (686 aa).

The region spanning 14 to 145 (DAVLNTPEIE…QDDQRIKEER (132 aa)) is the ENTH domain. 2 disordered regions span residues 177-417 (YDSD…FNNN) and 463-571 (NSSM…TMRP). A compositionally biased stretch (polar residues) spans 185 to 211 (NQRDSYGGNQRDSYGGNQRDSYGGNQR). The span at 212–225 (ETTRRDSFNGRDEG) shows a compositional bias: basic and acidic residues. Residues 237–256 (SYDSDPYSNTRAEYENYSNR) show a composition bias toward polar residues. Low complexity-rich tracts occupy residues 269 to 340 (SNNS…SGPS) and 383 to 417 (NNTN…FNNN). The span at 491 to 503 (FDQQSGDFSNKND) shows a compositional bias: polar residues. Positions 504 to 521 (GQQKPKDTNDPWSKKDLF) are enriched in basic and acidic residues. Low complexity predominate over residues 527–547 (GNQNPNQSPVNNTNNNNNGNT). A compositionally biased stretch (polar residues) spans 558-567 (PITSAGSTIP).

Belongs to the epsin family.

The protein localises to the membrane. It is found in the clathrin-coated pit. Functionally, binds to membranes enriched in phosphatidylinositol 4,5-bisphosphate (PtdIns(4,5)P2). This is Epsin (epnA) from Dictyostelium discoideum (Social amoeba).